The primary structure comprises 72 residues: MSKEDLIEFTGTVMELLPNAMFRVTLDNEHTILAHTSGKMRKNRIRVLAGDRVNVEMTPYDLSKGRITFRFK.

The region spanning 1-72 (MSKEDLIEFT…SKGRITFRFK (72 aa)) is the S1-like domain.

It belongs to the IF-1 family. Component of the 30S ribosomal translation pre-initiation complex which assembles on the 30S ribosome in the order IF-2 and IF-3, IF-1 and N-formylmethionyl-tRNA(fMet); mRNA recruitment can occur at any time during PIC assembly.

Its subcellular location is the cytoplasm. One of the essential components for the initiation of protein synthesis. Stabilizes the binding of IF-2 and IF-3 on the 30S subunit to which N-formylmethionyl-tRNA(fMet) subsequently binds. Helps modulate mRNA selection, yielding the 30S pre-initiation complex (PIC). Upon addition of the 50S ribosomal subunit IF-1, IF-2 and IF-3 are released leaving the mature 70S translation initiation complex. This is Translation initiation factor IF-1 from Gluconobacter oxydans (strain 621H) (Gluconobacter suboxydans).